Reading from the N-terminus, the 156-residue chain is Neuroactive polyprotein R15 (156 aa).

The first 26 residues, 1–26 (MDSAGLHINFRLSHVLTVVTCILYIL), serve as a signal peptide directing secretion. A propeptide spanning residues 27 to 48 (PPTTTAYSLPAPGKAAFQHQLS) is cleaved from the precursor. A disulfide bond links cysteine 74 and cysteine 81. Glutamine 120 is subject to Pyrrolidone carboxylic acid.

As to expression, expressed within the abdominal ganglion in neurons R15, RB(HE), the two L9(G) gill motoneurons, and L40 interneuron, all are parts of autonomic control circuit that contributes to implementing a central command to coordinate autonomic activity with escape locomotion.

Its subcellular location is the secreted. Functionally, the alpha-1 peptide acts as an osmoregulatory peptide, increasing blood volume, and also modulates the activity of a set of cardiac motor neurons that control heart rate. The polypeptide is Neuroactive polyprotein R15 (Aplysia californica (California sea hare)).